Here is a 171-residue protein sequence, read N- to C-terminus: Large ribosomal subunit protein uL10 (171 aa).

This sequence belongs to the universal ribosomal protein uL10 family. In terms of assembly, part of the ribosomal stalk of the 50S ribosomal subunit. The N-terminus interacts with L11 and the large rRNA to form the base of the stalk. The C-terminus forms an elongated spine to which L12 dimers bind in a sequential fashion forming a multimeric L10(L12)X complex.

Its function is as follows. Forms part of the ribosomal stalk, playing a central role in the interaction of the ribosome with GTP-bound translation factors. In Lactococcus lactis subsp. cremoris (strain SK11), this protein is Large ribosomal subunit protein uL10.